The sequence spans 303 residues: MVSLSCLISYGECLLETVQTHPWSTIGVVVFLSSVKNAPLMWHARLIIAVFYHSVTRKNDVVTIERYGRQGLFGYIVTSSRSPLYECDINGHKSDSTYFSDLDINRIHLITRLFKGAGDLSLRPDRPNVAPEDRPKKMRVLLGGTCCSFRREIKPYAAYEIHSRVLAWDEKWLYVVSYFVKPGSARKMASLQTEVGDKCEMTDLARSMVFTSAITKFVFKDGRKTVRPADALEEMGLLSASEEVVEISEAGEDLWTRSRVEERRKTGIKIAQHFIALDELHDQFEHVSEHPFLGKFGVLGTMF.

The protein belongs to the lcsJ thioesterase family.

The protein operates within secondary metabolite biosynthesis. Thioesterase; part of the gene cluster that mediates the biosynthesis of oxaleimides, cytotoxic compounds containing an unusual disubstituted succinimide moiety. The first step of the pathway is provided by the HR-PKS poxF that serves in a new mode of collaborative biosynthesis with the PKS-NRPS poxE, by providing the olefin containing amino acid substrate via the synthesis of an ACP-bound dec-4-enoate. The cytochrome P450 monooxygenase poxM-catalyzed oxidation at the alpha-position creates the enzyme-bound 2-hydroxydec-4-enoyl-ACP thioester, which may be prone to spontaneous hydrolysis to yield 2-hydroxydec-4-enoic acid due to increased electrophilicity of the carbonyl. 2-hydroxydec-4-enoic acid can then be further oxidized by poxM to yield the alpha-ketoacid 2-oxodec-4-enoicacid, which is reductively aminated by the aminotransferase poxL to yield (S,E)-2-aminodec-4-enoic acid. The Hybrid PKS-NRPS synthetase poxE then performs condensation between the octaketide product of its PKS modules and the amino group of (S,E)-2-aminodec-4-enoic acid which is activated and incorporated by the adenylation domain. The resulting aminoacyl product can be cyclized by the Diels-Alderase PoxQ and reductively released by the reductive (R) domain of poxE to yield an aldehyde intermediate. The released aldehyde is then substrate for a Knoevenagel condensation by the hydrolyase poxO followed by an oxidation at the 5-position of the pyrrolidone ring. The presence of the olefin from the amino acid building block allows for migration of the substituted allyl group to occur. This allylic transposition reaction takes place in a conjugate addition, semipinacol-like fashion to yield a succinimide intermediate. Iterative two-electron oxidations of the C7 methyl of the succinimide intermediate to the carboxylic acid can be catalyzed by one of two remaining cytochrome P450 monooxygenasess poxC or poxD to yield oxaleimide A. Subsequent oxidation yields the maleimide scaffold oxaleimide I. Both oxaleimide A and oxaleimide I can undergo oxidative modifications in the decalin ring to yield the series of products oxaleimides B to H. This Penicillium oxalicum protein is Thioesterase poxG.